Consider the following 378-residue polypeptide: MAKRDFYEVLGLSKTADEKEIKRAYKRLAMKYHPDRNQGDKDSESKFKEIKEAYEVLSDPQKRAAYDQYGHAAFEQGGFGGQGGGGFGGADFSDIFGDVFGDIFGGGRRQQRAARGSDLQYNMDLTLEEAVRGITKEIRIPTLETCDKCHGSGAKEGTSAETCSTCHGAGQVHLRQGFFTVQQPCPTCHGRGKVIKEPCSKCHGDGRVERYKTLSVKIPAGVDTGDRIRLSGEGEAGEQGAPAGDLYVQVHVRQHHIFERDGNNLYCEVPINFAVAALGGEIEVPTLDGRVKLKIPAETQTGKMFRMKGKGVKSVRSHGVGDLMCRVVVETPVKLNEKQKQLMEQLGESFGGKGGEKNTPRSKSFLDGVKKFFDDLTK.

The J domain maps to 5-70 (DFYEVLGLSK…QKRAAYDQYG (66 aa)). The segment at 133–211 (GITKEIRIPT…CHGDGRVERY (79 aa)) adopts a CR-type zinc-finger fold. Positions 146, 149, 163, 166, 185, 188, 199, and 202 each coordinate Zn(2+). 4 CXXCXGXG motif repeats span residues 146 to 153 (CDKCHGSG), 163 to 170 (CSTCHGAG), 185 to 192 (CPTCHGRG), and 199 to 206 (CSKCHGDG).

This sequence belongs to the DnaJ family. As to quaternary structure, homodimer. Zn(2+) is required as a cofactor.

Its subcellular location is the cytoplasm. Its function is as follows. Participates actively in the response to hyperosmotic and heat shock by preventing the aggregation of stress-denatured proteins and by disaggregating proteins, also in an autonomous, DnaK-independent fashion. Unfolded proteins bind initially to DnaJ; upon interaction with the DnaJ-bound protein, DnaK hydrolyzes its bound ATP, resulting in the formation of a stable complex. GrpE releases ADP from DnaK; ATP binding to DnaK triggers the release of the substrate protein, thus completing the reaction cycle. Several rounds of ATP-dependent interactions between DnaJ, DnaK and GrpE are required for fully efficient folding. Also involved, together with DnaK and GrpE, in the DNA replication of plasmids through activation of initiation proteins. The sequence is that of Chaperone protein DnaJ from Proteus mirabilis (strain HI4320).